The primary structure comprises 83 residues: Apolipoprotein C-I, basic form (83 aa).

The first 26 residues, 1–26 (MRLFLSLPVLVVVLSIVLEGPAPAQG), serve as a signal peptide directing secretion.

It belongs to the apolipoprotein C1 family.

It localises to the secreted. In terms of biological role, inhibitor of lipoprotein binding to the low density lipoprotein (LDL) receptor, LDL receptor-related protein, and very low density lipoprotein (VLDL) receptor. Associates with high density lipoproteins (HDL) and the triacylglycerol-rich lipoproteins in the plasma and makes up about 10% of the protein of the VLDL and 2% of that of HDL. Appears to interfere directly with fatty acid uptake and is also the major plasma inhibitor of cholesteryl ester transfer protein (CETP). Binds free fatty acids and reduces their intracellular esterification. Modulates the interaction of APOE with beta-migrating VLDL and inhibits binding of beta-VLDL to the LDL receptor-related protein. In Pan troglodytes (Chimpanzee), this protein is Apolipoprotein C-I, basic form (APOC1B).